The primary structure comprises 1099 residues: Glutamine--fructose-6-phosphate aminotransferase [isomerizing] (1099 aa).

Residue Cys-2 is the Nucleophile; for GATase activity of the active site. One can recognise a Glutamine amidotransferase type-2; first part domain in the interval 2 to 71; it reads CGIIGYIGND…DIDGNIGIGH (70 aa). One can recognise an HTH cro/C1-type domain in the interval 198–253; the sequence is LRKVREKLGLTRKDVEKLCGVKEIYIVKIETGKLESIEEERLKKLCSLYGINFEEI. The DOD-type homing endonuclease domain occupies 278–413; the sequence is IIGYIIGDGH…IQFLLLRFGI (136 aa). One can recognise a Glutamine amidotransferase type-2; second part domain in the interval 571–723; that stretch reads SRWATHGNVC…DGDVVVIKKK (153 aa). 2 SIS domains span residues 786–923 and 948–1089; these read LAKC…LLGR and TIKE…VDKP. The active-site For Fru-6P isomerization activity is the Lys-1094.

It in the C-terminal section; belongs to the SIS family. GFAT subfamily. As to quaternary structure, homodimer. In terms of processing, this protein undergoes a protein self splicing that involves a post-translational excision of the intervening region (intein) followed by peptide ligation.

Its subcellular location is the cytoplasm. It carries out the reaction D-fructose 6-phosphate + L-glutamine = D-glucosamine 6-phosphate + L-glutamate. Functionally, catalyzes the first step in hexosamine metabolism, converting fructose-6P into glucosamine-6P using glutamine as a nitrogen source. This is Glutamine--fructose-6-phosphate aminotransferase [isomerizing] (glmS) from Methanocaldococcus jannaschii (strain ATCC 43067 / DSM 2661 / JAL-1 / JCM 10045 / NBRC 100440) (Methanococcus jannaschii).